Here is a 217-residue protein sequence, read N- to C-terminus: Peptide deformylase 1 (217 aa).

The Fe cation site is built by Cys129 and His171. Glu172 is a catalytic residue. His175 serves as a coordination point for Fe cation.

It belongs to the polypeptide deformylase family. Requires Fe(2+) as cofactor.

It catalyses the reaction N-terminal N-formyl-L-methionyl-[peptide] + H2O = N-terminal L-methionyl-[peptide] + formate. In terms of biological role, removes the formyl group from the N-terminal Met of newly synthesized proteins. Requires at least a dipeptide for an efficient rate of reaction. N-terminal L-methionine is a prerequisite for activity but the enzyme has broad specificity at other positions. The sequence is that of Peptide deformylase 1 from Bifidobacterium longum (strain NCC 2705).